A 418-amino-acid chain; its full sequence is Cytochrome P450 monooxygenase ABA2 (418 aa).

Cysteine 355 serves as a coordination point for heme.

It belongs to the cytochrome P450 family. It depends on heme as a cofactor.

Its pathway is hormone biosynthesis. In terms of biological role, cytochrome P450 monooxygenase involved in the biosynthesis of abscisic acid (ABA), a phytohormone that acts antagonistically toward salicylic acid (SA), jasmonic acid (JA) and ethylene (ETH) signaling, to impede plant defense responses. During pathogen-host interaction, ABA plays a dual role in disease severity by increasing plant susceptibility and accelerating pathogenesis in the fungus itself. The first step of the pathway catalyzes the reaction from farnesyl diphosphate to alpha-ionylideneethane performed by the alpha-ionylideneethane synthase ABA3 via a three-step reaction mechanism involving 2 neutral intermediates, beta-farnesene and allofarnesene. The cytochrome P450 monooxygenase ABA1 might then be involved in the conversion of alpha-ionylideneethane to alpha-ionylideneacetic acid. Alpha-ionylideneacetic acid is further converted to abscisic acid in 2 steps involving the cytochrome P450 monooxygenase ABA2 and the short-chain dehydrogenase/reductase ABA4, via the intermediates 1'-deoxy-ABA or 1',4'-trans-diol-ABA, depending on the order of action of these 2 enzymes. ABA2 is responsible for the hydroxylation of carbon atom C-1' and ABA4 might be involved in the oxidation of the C-4' carbon atom. This chain is Cytochrome P450 monooxygenase ABA2, found in Pyricularia oryzae (strain Y34) (Rice blast fungus).